The chain runs to 279 residues: uncharacterized protein (279 aa).

3 helical membrane passes run 1–21 (MGFI…LCGI), 38–58 (FACH…SVVA), and 131–151 (SLRY…VFID).

Belongs to the 1-acyl-sn-glycerol-3-phosphate acyltransferase family.

Its subcellular location is the endoplasmic reticulum membrane. This is an uncharacterized protein from Schizosaccharomyces pombe (strain 972 / ATCC 24843) (Fission yeast).